The sequence spans 159 residues: Large ribosomal subunit protein bL35c (159 aa).

The N-terminal 86 residues, 1-86, are a transit peptide targeting the chloroplast; it reads MAMASATATL…TSSPSFTVFA (86 aa).

As to quaternary structure, component of the chloroplast large ribosomal subunit (LSU). Mature 70S chloroplast ribosomes of higher plants consist of a small (30S) and a large (50S) subunit. The 30S small subunit contains 1 molecule of ribosomal RNA (16S rRNA) and 24 different proteins. The 50S large subunit contains 3 rRNA molecules (23S, 5S and 4.5S rRNA) and 33 different proteins.

It localises to the plastid. Its subcellular location is the chloroplast. Component of the chloroplast ribosome (chloro-ribosome), a dedicated translation machinery responsible for the synthesis of chloroplast genome-encoded proteins, including proteins of the transcription and translation machinery and components of the photosynthetic apparatus. This is Large ribosomal subunit protein bL35c (RPL35) from Spinacia oleracea (Spinach).